The sequence spans 621 residues: METPIAEELAKKQKSISVAEFFEKNRQILGFDSAPRSLITTVKEAVDNALDACEEAGILPDILVQVERTGPDYVTVIIEDNGPGIVREQIPKVFAKLLYGSRFHALKQSRGQQGIGISAAVLYAQMTAGRHTKILSKTSPTAPAHYYELMINTSTNEPDILVDEVRDWFRPHGTQIELEMRAAYVKGRRQSIYEYLKATAIVNPHARITLIDPDGNEEVFERATDKMPEPAEEILPHPEGIELGTLMKMLHYTERQKLAPFLRYSFCKIGLLTAEEICKAAGLDPEIDPHALGRHEARKLIEAFEKVKIMAPPTDCLSPIGEDLIYRGLEKETTVDFIATSTRKPAVYSGNPFVVEVGMAYGGNLPKEEKISIMRFANRVPLLYQQGGCVTTHAVEDIKWKQYGLNQPGGGIPVGPVILLIHVASINVPFTSESKDAIADIPVIKEEIDLAIKEVARKLKHYLSKQSNLKKRREKEIIITKVLPKLAAKVAHVLEKDVPDINPVVAKIMGNLLVHRVIKNNGDGTVDVAIKVKNFGTSAYSFRVHEMLPCKVSGAKPEPKVVTMGNDYDYVWDISASAGSSKVLSYKIESASEEELQKLPQLIVEGIEEELVTGAKAFKGV.

ATP-binding positions include asparagine 48, aspartate 80, serine 101 to arginine 102, glycine 111 to serine 118, and lysine 435.

It belongs to the TOP6B family. Homodimer. Heterotetramer of two Top6A and two Top6B chains.

It catalyses the reaction ATP-dependent breakage, passage and rejoining of double-stranded DNA.. Relaxes both positive and negative superturns and exhibits a strong decatenase activity. This Methanosarcina mazei (strain ATCC BAA-159 / DSM 3647 / Goe1 / Go1 / JCM 11833 / OCM 88) (Methanosarcina frisia) protein is Type 2 DNA topoisomerase 6 subunit B.